The sequence spans 452 residues: Bifunctional protein GlmU (452 aa).

The interval methionine 1–lysine 224 is pyrophosphorylase. UDP-N-acetyl-alpha-D-glucosamine is bound by residues leucine 6–glycine 9, lysine 20, glutamine 71, glycine 76–threonine 77, tyrosine 98–aspartate 100, glycine 134, glutamate 149, asparagine 164, and asparagine 222. Aspartate 100 lines the Mg(2+) pocket. A Mg(2+)-binding site is contributed by asparagine 222. The segment at valine 225–alanine 245 is linker. The tract at residues glycine 246 to lysine 452 is N-acetyltransferase. 2 residues coordinate UDP-N-acetyl-alpha-D-glucosamine: arginine 328 and lysine 346. Histidine 358 functions as the Proton acceptor in the catalytic mechanism. UDP-N-acetyl-alpha-D-glucosamine contacts are provided by tyrosine 361 and asparagine 372. Residues alanine 375, asparagine 381–tyrosine 382, serine 400, alanine 418, and arginine 435 each bind acetyl-CoA.

The protein in the N-terminal section; belongs to the N-acetylglucosamine-1-phosphate uridyltransferase family. It in the C-terminal section; belongs to the transferase hexapeptide repeat family. In terms of assembly, homotrimer. Requires Mg(2+) as cofactor.

It is found in the cytoplasm. The enzyme catalyses alpha-D-glucosamine 1-phosphate + acetyl-CoA = N-acetyl-alpha-D-glucosamine 1-phosphate + CoA + H(+). It carries out the reaction N-acetyl-alpha-D-glucosamine 1-phosphate + UTP + H(+) = UDP-N-acetyl-alpha-D-glucosamine + diphosphate. It participates in nucleotide-sugar biosynthesis; UDP-N-acetyl-alpha-D-glucosamine biosynthesis; N-acetyl-alpha-D-glucosamine 1-phosphate from alpha-D-glucosamine 6-phosphate (route II): step 2/2. It functions in the pathway nucleotide-sugar biosynthesis; UDP-N-acetyl-alpha-D-glucosamine biosynthesis; UDP-N-acetyl-alpha-D-glucosamine from N-acetyl-alpha-D-glucosamine 1-phosphate: step 1/1. Its pathway is bacterial outer membrane biogenesis; LPS lipid A biosynthesis. Functionally, catalyzes the last two sequential reactions in the de novo biosynthetic pathway for UDP-N-acetylglucosamine (UDP-GlcNAc). The C-terminal domain catalyzes the transfer of acetyl group from acetyl coenzyme A to glucosamine-1-phosphate (GlcN-1-P) to produce N-acetylglucosamine-1-phosphate (GlcNAc-1-P), which is converted into UDP-GlcNAc by the transfer of uridine 5-monophosphate (from uridine 5-triphosphate), a reaction catalyzed by the N-terminal domain. The chain is Bifunctional protein GlmU from Dechloromonas aromatica (strain RCB).